The following is a 227-amino-acid chain: DNA repair protein RecO (227 aa).

Belongs to the RecO family.

Its function is as follows. Involved in DNA repair and RecF pathway recombination. The chain is DNA repair protein RecO from Pseudomonas putida (strain ATCC 47054 / DSM 6125 / CFBP 8728 / NCIMB 11950 / KT2440).